Consider the following 161-residue polypeptide: 4-hydroxybenzoyl-CoA reductase subunit gamma (161 aa).

Residues 3–79 (NILRLTLNGR…GKKVETVESL (77 aa)) enclose the 2Fe-2S ferredoxin-type domain. 8 residues coordinate [2Fe-2S] cluster: Cys-41, Cys-46, Cys-49, Cys-61, Cys-100, Cys-103, Cys-135, and Cys-137.

In terms of assembly, heterohexamer of two alpha, two beta and two gamma subunits. [2Fe-2S] cluster is required as a cofactor.

The catalysed reaction is oxidized 2[4Fe-4S]-[ferredoxin] + benzoyl-CoA + H2O = 4-hydroxybenzoyl-CoA + reduced 2[4Fe-4S]-[ferredoxin] + 2 H(+). With respect to regulation, inactivated by low concentrations of cyanide in vitro. Its function is as follows. Component of a complex that catalyzes the reductive dehydroxylation of 4-hydroxybenzoyl-CoA to benzoyl-CoA. Reaction is not reversible. Is a key enzyme in the anaerobic degradation of phenolic compounds. The polypeptide is 4-hydroxybenzoyl-CoA reductase subunit gamma (hcrC) (Thauera aromatica).